The primary structure comprises 132 residues: Translation initiation factor 2 subunit beta (132 aa).

Residues 1–30 are disordered; the sequence is MDYEEQLDRAMDEKPDVTGSETRFEVPDPN.

The protein belongs to the eIF-2-beta/eIF-5 family. In terms of assembly, heterotrimer composed of an alpha, a beta and a gamma chain.

In terms of biological role, eIF-2 functions in the early steps of protein synthesis by forming a ternary complex with GTP and initiator tRNA. This Halobacterium salinarum (strain ATCC 29341 / DSM 671 / R1) protein is Translation initiation factor 2 subunit beta.